Consider the following 595-residue polypeptide: Thiol:disulfide interchange protein DsbD (595 aa).

The first 24 residues, methionine 1–serine 24, serve as a signal peptide directing secretion. Cysteines 134 and 140 form a disulfide. The tract at residues asparagine 166 to valine 186 is disordered. Helical transmembrane passes span alanine 197–isoleucine 217, isoleucine 233–leucine 253, tyrosine 270–tyrosine 290, glycine 311–cysteine 331, threonine 332–glycine 352, glycine 353–phenylalanine 373, tryptophan 384–leucine 404, valine 411–leucine 431, and alanine 435–alanine 455. A disulfide bond links cysteine 209 and cysteine 331. One can recognise a Thioredoxin domain in the interval leucine 452 to alanine 592. A disulfide bond links cysteine 507 and cysteine 510.

The protein belongs to the thioredoxin family. DsbD subfamily.

The protein localises to the cell inner membrane. It carries out the reaction [protein]-dithiol + NAD(+) = [protein]-disulfide + NADH + H(+). The catalysed reaction is [protein]-dithiol + NADP(+) = [protein]-disulfide + NADPH + H(+). In terms of biological role, required to facilitate the formation of correct disulfide bonds in some periplasmic proteins and for the assembly of the periplasmic c-type cytochromes. Acts by transferring electrons from cytoplasmic thioredoxin to the periplasm. This transfer involves a cascade of disulfide bond formation and reduction steps. The protein is Thiol:disulfide interchange protein DsbD of Yersinia pestis bv. Antiqua (strain Nepal516).